A 490-amino-acid chain; its full sequence is 5'-3' exonuclease PLD3 (490 aa).

Residues 1–38 (MKPKLMYQELKVPAEEPANELPMNEIEAWKAAEKKARW) are Cytoplasmic-facing. A helical; Signal-anchor for type II membrane protein transmembrane segment spans residues 39–59 (VLLVLILAVVGFGALMTQLFL). The Lumenal segment spans residues 60–490 (WEYGDLHLFG…DSVGNACRLL (431 aa)). 2 disulfides stabilise this stretch: Cys77-Cys239 and Cys81-Cys237. Residues Asn97 and Asn132 are each glycosylated (N-linked (GlcNAc...) asparagine). The 28-residue stretch at 196-223 (THGVLHTKFWVVDQTHFYLGSANMDWRS) folds into the PLD phosphodiesterase 1 domain. Residues His201, Lys203, and Asp208 contribute to the active site. His201 acts as the Proton donor in catalysis. His201 and Lys203 together coordinate phosphate. Asn218 is a binding site for phosphate. Residues Asn236, Asn284, and Asn387 are each glycosylated (N-linked (GlcNAc...) asparagine). The cysteines at positions 366 and 487 are disulfide-linked. The 27-residue stretch at 411–437 (YARVNHNKYMVTERATYIGTSNWSGNY) folds into the PLD phosphodiesterase 2 domain. His416 is a binding site for phosphate. His416 functions as the Nucleophile in the catalytic mechanism. Phe438 is a binding site for Mg(2+).

Belongs to the phospholipase D family. Homodimer. Interacts with APP. Post-translationally, N-glycosylated. In terms of processing, proteolytically processed to a soluble form that is stable within endosomes and lysosomes. During transport through the secretory pathway becomes proteolysed by cysteine proteases, thereby releasing a stable soluble lysosomal lumenal polypeptide, whereas the transmembrane-bound fragment is rapidly degraded. Its transport route to lysosomes involves ubiquitination and the ESCRT complex. Ubiquitinated. Ubiquitination mediates sorting into lysosomes.

The protein resides in the endoplasmic reticulum membrane. The protein localises to the lysosome lumen. Its subcellular location is the early endosome membrane. It is found in the late endosome membrane. It localises to the golgi apparatus membrane. The protein resides in the endosome membrane. It carries out the reaction Exonucleolytic cleavage in the 5'- to 3'-direction to yield nucleoside 3'-phosphates.. It catalyses the reaction a 5'-end 5'-dephospho-ribonucleotidyl-ribonucleotide-RNA + H2O = a ribonucleoside 3'-phosphate + a 5'-end dephospho-ribonucleoside-RNA + H(+). The catalysed reaction is a ribonucleoside 3'-phosphate-2'-3'-cyclophospho-GMP + H2O = a ribonucleoside 3'-phosphate + 2',3'-cyclophospho-GMP + H(+). The enzyme catalyses a 5'-end 5'-dephospho-2'-deoxyribonucleotidyl-2'-deoxyribonucleotide in single-stranded DNA + H2O = a 5'-end dephospho-2'-deoxyribonucleoside in single-stranded DNA + a 2'-deoxyribonucleoside 3'-phosphate + H(+). It carries out the reaction a 5'-end 5'-phospho-2'-deoxyribonucleotide in single-stranded DNA + H2O = a 5'-end 5'-dephospho-2'-deoxyribonucleotide in single-stranded DNA + phosphate. It catalyses the reaction a 3-lyso-sn-glycero-1-phospho-(3'-acyl-1'-sn-glycerol) + a 1-acyl-sn-glycerol = a 3-acyl-sn-glycero-1-phospho-(3'-acyl-1'-sn-glycerol) + glycerol. The catalysed reaction is 3-lyso-sn-glycero-1-phospho-(3'-(9Z-octadecenoyl)-1'-sn-glycerol) + 1-(9Z-octadecenoyl)-sn-glycerol = 3-(9Z-octadecenoyl)-sn-glycero-1-phospho-(3'-(9Z-octadecenoyl)-1'-sn-glycerol) + glycerol. 5'-&gt;3' exonuclease that hydrolyzes the phosphodiester bond of single-stranded DNA (ssDNA) and RNA molecules to form nucleoside 3'-monophosphates and 5'-end 5'-hydroxy deoxyribonucleotide/ribonucleotide fragments. Partially redundant with PLD4, can cleave all four nucleotides displaying higher efficiency for ssDNA and RNA fragments initiated with uridine and guanosine residues and lower efficiency for cytidine-initiated substrates. As a result, it does not always degrade polynucleotides to the single nucleotide level, it can stall at specific sites sparing certain fragments from exonucleolytic degradation. Processes self and pathogenic ssDNA and RNA molecules that reach the endolysosomal compartment via phagocytosis or autophagy and may serve as 'danger' signals for recognition by innate immune receptors such as toll-like receptors (TLRs). Degrades mitochondrial CpG-rich ssDNA fragments to prevent TLR9 activation and autoinflammatory response, but it can cleave viral RNA to generate ligands for TLR7 activation and initiate antiviral immune responses. In plasmacytoid dendritic cells, it cooperates with endonuclease RNASET2 to release 2',3'-cyclic guanosine monophosphate (2',3'-cGMP), a potent stimulatory ligand for TLR7. Produces 2',3'-cGMPs and cytidine-rich RNA fragments that occupy TLR7 ligand-binding pockets and trigger a signaling-competent state. Can exert polynucleotide phosphatase activity toward 5'-phosphorylated ssDNA substrates although at a slow rate. Transphosphatidylase that catalyzes the exchange with R to S stereo-inversion of the glycerol moiety between (S,R)-lysophosphatidylglycerol (LPG) and monoacylglycerol (MAG) substrates to yield (S,S)-bis(monoacylglycero)phosphate (BMP). Can synthesize a variety of (S,S)-BMPs representing the main phospholipid constituent of lysosomal intralumenal vesicle (ILV) membranes that bind acid hydrolases for lipid degradation. Regulates the homeostasis and interorganellar communication of the endolysosomal system with an overall impact on cellular removal of dysfunctional organelles via autophagy as well as proper protein and lipid turnover. May play a role in myotube formation in response to ER stress. This Macaca fascicularis (Crab-eating macaque) protein is 5'-3' exonuclease PLD3 (PLD3).